The primary structure comprises 104 residues: Large ribosomal subunit protein uL24 (104 aa).

This sequence belongs to the universal ribosomal protein uL24 family. As to quaternary structure, part of the 50S ribosomal subunit.

In terms of biological role, one of two assembly initiator proteins, it binds directly to the 5'-end of the 23S rRNA, where it nucleates assembly of the 50S subunit. Its function is as follows. One of the proteins that surrounds the polypeptide exit tunnel on the outside of the subunit. This is Large ribosomal subunit protein uL24 from Shewanella denitrificans (strain OS217 / ATCC BAA-1090 / DSM 15013).